Reading from the N-terminus, the 504-residue chain is Arabinose import ATP-binding protein AraG (504 aa).

2 consecutive ABC transporter domains span residues 8–243 (LSFR…MVGR) and 256–499 (YGEE…MPKV). 40–47 (GENGAGKS) contacts ATP.

Belongs to the ABC transporter superfamily. Arabinose importer (TC 3.A.1.2.2) family. The complex is composed of two ATP-binding proteins (AraG), two transmembrane proteins (AraH) and a solute-binding protein (AraF).

The protein resides in the cell inner membrane. The enzyme catalyses L-arabinose(out) + ATP + H2O = L-arabinose(in) + ADP + phosphate + H(+). Its function is as follows. Part of the ABC transporter complex AraFGH involved in arabinose import. Responsible for energy coupling to the transport system. This Escherichia coli O6:K15:H31 (strain 536 / UPEC) protein is Arabinose import ATP-binding protein AraG.